A 179-amino-acid chain; its full sequence is Putative invertase inhibitor (179 aa).

The first 23 residues, 1-23, serve as a signal peptide directing secretion; the sequence is MKLSFSLCIFFFNLLLLLQAVIS. Intrachain disulfides connect Cys-31/Cys-46 and Cys-102/Cys-142.

This sequence belongs to the PMEI family. As to quaternary structure, monomer. Post-translationally, not glycosylated. Expressed in pollen (at protein level). Expressed in stem, but not leaves (at protein level). Expressed in pollen.

It localises to the secreted. The protein resides in the cell wall. It is found in the endoplasmic reticulum. Invertase inhibitor. This Platanus acerifolia (London plane tree) protein is Putative invertase inhibitor.